The sequence spans 276 residues: Probable endonuclease 4 (276 aa).

9 residues coordinate Zn(2+): H65, H105, E141, D175, H178, H210, D223, H225, and E255.

Belongs to the AP endonuclease 2 family. Zn(2+) serves as cofactor.

It catalyses the reaction Endonucleolytic cleavage to 5'-phosphooligonucleotide end-products.. Endonuclease IV plays a role in DNA repair. It cleaves phosphodiester bonds at apurinic or apyrimidinic (AP) sites, generating a 3'-hydroxyl group and a 5'-terminal sugar phosphate. This Symbiobacterium thermophilum (strain DSM 24528 / JCM 14929 / IAM 14863 / T) protein is Probable endonuclease 4.